A 206-amino-acid polypeptide reads, in one-letter code: Pyridoxine/pyridoxamine 5'-phosphate oxidase (206 aa).

FMN is bound by residues R53 to K58, Y68 to T69, K75, and Q97. Position 58 (K58) interacts with substrate. The substrate site is built by Y115, R119, and S123. Residues Q132–S133 and W177 each bind FMN. Position 183–185 (R183–H185) interacts with substrate. Residue R187 coordinates FMN.

Belongs to the pyridoxamine 5'-phosphate oxidase family. Homodimer. FMN is required as a cofactor.

The enzyme catalyses pyridoxamine 5'-phosphate + O2 + H2O = pyridoxal 5'-phosphate + H2O2 + NH4(+). It catalyses the reaction pyridoxine 5'-phosphate + O2 = pyridoxal 5'-phosphate + H2O2. The protein operates within cofactor metabolism; pyridoxal 5'-phosphate salvage; pyridoxal 5'-phosphate from pyridoxamine 5'-phosphate: step 1/1. It participates in cofactor metabolism; pyridoxal 5'-phosphate salvage; pyridoxal 5'-phosphate from pyridoxine 5'-phosphate: step 1/1. Catalyzes the oxidation of either pyridoxine 5'-phosphate (PNP) or pyridoxamine 5'-phosphate (PMP) into pyridoxal 5'-phosphate (PLP). The protein is Pyridoxine/pyridoxamine 5'-phosphate oxidase of Allorhizobium ampelinum (strain ATCC BAA-846 / DSM 112012 / S4) (Agrobacterium vitis (strain S4)).